A 429-amino-acid chain; its full sequence is Adenylosuccinate synthetase (429 aa).

GTP-binding positions include 12–18 (GDEGKGK) and 40–42 (GHT). Catalysis depends on Asp-13, which acts as the Proton acceptor. Asp-13 and Gly-40 together coordinate Mg(2+). Residues 13 to 16 (DEGK), 38 to 41 (NAGH), Thr-129, Arg-143, Gln-223, Thr-238, and Arg-302 contribute to the IMP site. His-41 serves as the catalytic Proton donor. 298–304 (VVTGRKR) serves as a coordination point for substrate. Residues Arg-304, 330–332 (KLD), and 412–414 (STS) contribute to the GTP site.

This sequence belongs to the adenylosuccinate synthetase family. Homodimer. Requires Mg(2+) as cofactor.

It localises to the cytoplasm. It carries out the reaction IMP + L-aspartate + GTP = N(6)-(1,2-dicarboxyethyl)-AMP + GDP + phosphate + 2 H(+). It functions in the pathway purine metabolism; AMP biosynthesis via de novo pathway; AMP from IMP: step 1/2. Its function is as follows. Plays an important role in the de novo pathway of purine nucleotide biosynthesis. Catalyzes the first committed step in the biosynthesis of AMP from IMP. This Bartonella bacilliformis (strain ATCC 35685 / KC583 / Herrer 020/F12,63) protein is Adenylosuccinate synthetase.